The chain runs to 335 residues: tRNA pseudouridine synthase D (335 aa).

Asp77 acts as the Nucleophile in catalysis. Residues 152–308 form the TRUD domain; that stretch reads GFPNYFTEQR…AQHLSWSFIP (157 aa).

The protein belongs to the pseudouridine synthase TruD family.

The catalysed reaction is uridine(13) in tRNA = pseudouridine(13) in tRNA. Functionally, responsible for synthesis of pseudouridine from uracil-13 in transfer RNAs. This chain is tRNA pseudouridine synthase D, found in Histophilus somni (strain 129Pt) (Haemophilus somnus).